Here is a 914-residue protein sequence, read N- to C-terminus: Chitin synthase B (914 aa).

Disordered regions lie at residues 1-67 and 112-140; these read MAYQ…TSGY and YARSETSSTEAWRQRQAPGGAGSGGGGGL. Gly residues predominate over residues 130 to 140; that stretch reads GGAGSGGGGGL. Transmembrane regions (helical) follow at residues 543-562, 586-606, 627-647, 662-682, 712-732, 843-863, and 882-902; these read WLNGSFAAGIYSLMHFGRMY, ILTWFSLASYWLTTSVIMDLV, IVNTIVKYAYLGFLLLQFILA, SFVVFGIIQLYVVVDALYLVV, AGIIIIALAATFGLYFVASFM, LVTFWIFSNALMAVCITSDGV, and ALLWSNAVVALFRFIGACWFL.

This sequence belongs to the chitin synthase family. Class III subfamily.

The protein localises to the cell membrane. It catalyses the reaction [(1-&gt;4)-N-acetyl-beta-D-glucosaminyl](n) + UDP-N-acetyl-alpha-D-glucosamine = [(1-&gt;4)-N-acetyl-beta-D-glucosaminyl](n+1) + UDP + H(+). Its function is as follows. Polymerizes chitin, a structural polymer of the cell wall and septum, by transferring the sugar moiety of UDP-GlcNAc to the non-reducing end of the growing chitin polymer. Plays an important role in septal growth or maintenance. Mediates colony spore formation. The sequence is that of Chitin synthase B from Aspergillus niger (strain ATCC MYA-4892 / CBS 513.88 / FGSC A1513).